The sequence spans 415 residues: Homoserine O-acetyltransferase (415 aa).

The 323-residue stretch at asparagine 47–proline 369 folds into the AB hydrolase-1 domain. Serine 155 acts as the Nucleophile in catalysis. Arginine 226 is a substrate binding site. Active-site residues include aspartate 329 and histidine 362. Residue aspartate 363 coordinates substrate. Residues glycine 383–arginine 415 are disordered.

It belongs to the AB hydrolase superfamily. MetX family. Homodimer.

Its subcellular location is the cytoplasm. The catalysed reaction is L-homoserine + acetyl-CoA = O-acetyl-L-homoserine + CoA. Its pathway is amino-acid biosynthesis; L-methionine biosynthesis via de novo pathway; O-acetyl-L-homoserine from L-homoserine: step 1/1. Its function is as follows. Transfers an acetyl group from acetyl-CoA to L-homoserine, forming acetyl-L-homoserine. The protein is Homoserine O-acetyltransferase of Haloferax volcanii (strain ATCC 29605 / DSM 3757 / JCM 8879 / NBRC 14742 / NCIMB 2012 / VKM B-1768 / DS2) (Halobacterium volcanii).